A 186-amino-acid polypeptide reads, in one-letter code: Ferritin heavy chain (186 aa).

Residues 16-165 (QNYHQDSEAA…DHVTNLRKMG (150 aa)) enclose the Ferritin-like diiron domain. The Fe cation site is built by Glu-33, Glu-68, His-71, Glu-113, and Gln-147. Position 184 is a phosphoserine (Ser-184).

It belongs to the ferritin family. In terms of assembly, oligomer of 24 subunits. There are two types of subunits: L (light) chain and H (heavy) chain. The major chain can be light or heavy, depending on the species and tissue type. The functional molecule forms a roughly spherical shell with a diameter of 12 nm and contains a central cavity into which the insoluble mineral iron core is deposited. Interacts with NCOA4; NCOA4 promotes targeting of the iron-binding ferritin complex to autolysosomes following starvation or iron depletion.

The protein resides in the cytoplasm. The protein localises to the lysosome. Its subcellular location is the cytoplasmic vesicle. It is found in the autophagosome. The catalysed reaction is 4 Fe(2+) + O2 + 4 H(+) = 4 Fe(3+) + 2 H2O. Stores iron in a soluble, non-toxic, readily available form. Important for iron homeostasis. Has ferroxidase activity. Iron is taken up in the ferrous form and deposited as ferric hydroxides after oxidation. Also plays a role in delivery of iron to cells. Mediates iron uptake in capsule cells of the developing kidney. Delivery to lysosomes is mediated by the cargo receptor NCOA4 for autophagic degradation and release of iron. The polypeptide is Ferritin heavy chain (FTH1) (Cricetulus griseus (Chinese hamster)).